The chain runs to 154 residues: Superoxide dismutase [Cu-Zn] (154 aa).

Cu cation-binding residues include H47, H49, and H64. An intrachain disulfide couples C58 to C147. 4 residues coordinate Zn(2+): H64, H72, H81, and D84. Position 121 (H121) interacts with Cu cation. R144 is a binding site for substrate.

The protein belongs to the Cu-Zn superoxide dismutase family. Homodimer. The cofactor is Cu cation. Zn(2+) serves as cofactor.

It is found in the cytoplasm. The catalysed reaction is 2 superoxide + 2 H(+) = H2O2 + O2. Its function is as follows. Destroys radicals which are normally produced within the cells and which are toxic to biological systems. This chain is Superoxide dismutase [Cu-Zn] (SOD1), found in Podospora anserina (Pleurage anserina).